The sequence spans 488 residues: Altronate oxidoreductase (488 aa).

NAD(+) is bound at residue 18–29; it reads VIQFGEGNFLRA.

Belongs to the mannitol dehydrogenase family. UxaB subfamily.

It carries out the reaction D-altronate + NAD(+) = keto-D-tagaturonate + NADH + H(+). The protein operates within carbohydrate metabolism; pentose and glucuronate interconversion. The polypeptide is Altronate oxidoreductase (Pectobacterium carotovorum subsp. carotovorum (strain PC1)).